We begin with the raw amino-acid sequence, 128 residues long: Sulfurtransferase TusD (128 aa).

The active-site Cysteine persulfide intermediate is Cys78.

This sequence belongs to the DsrE/TusD family. In terms of assembly, heterohexamer, formed by a dimer of trimers. The hexameric TusBCD complex contains 2 copies each of TusB, TusC and TusD. The TusBCD complex interacts with TusE.

It is found in the cytoplasm. In terms of biological role, part of a sulfur-relay system required for 2-thiolation of 5-methylaminomethyl-2-thiouridine (mnm(5)s(2)U) at tRNA wobble positions. Accepts sulfur from TusA and transfers it in turn to TusE. The sequence is that of Sulfurtransferase TusD from Escherichia coli O17:K52:H18 (strain UMN026 / ExPEC).